The sequence spans 478 residues: Cysteine--tRNA ligase (478 aa).

C27 lines the Zn(2+) pocket. Residues 29–39 carry the 'HIGH' region motif; the sequence is PTTYNFIHLGN. Zn(2+)-binding residues include C207, H232, and E236. A 'KMSKS' region motif is present at residues 264–268; the sequence is KMSKS. Residue K267 coordinates ATP.

The protein belongs to the class-I aminoacyl-tRNA synthetase family. In terms of assembly, monomer. It depends on Zn(2+) as a cofactor.

Its subcellular location is the cytoplasm. It carries out the reaction tRNA(Cys) + L-cysteine + ATP = L-cysteinyl-tRNA(Cys) + AMP + diphosphate. This chain is Cysteine--tRNA ligase, found in Desulforudis audaxviator (strain MP104C).